The chain runs to 112 residues: Protein preY, mitochondrial (112 aa).

The N-terminal 34 residues, 1–34 (MLTTTCRRLSQALQRPHALSAVAQRCLRAPGARS), are a transit peptide targeting the mitochondrion. A TRM112 domain is found at 49 to 95 (HPALLQFLVCPLSKKPLRYDASTNELINDELGIAYPIIDGVPNMIPQ).

The protein belongs to the PREY family. Interacts (via TRM112 domain) with NDUFAF5; the interaction is direct and stabilizes NDUFAF5 protein. Interacts with COQ5; the interaction is direct, stabilizes COQ5 protein and associates PYURF with COQ enzyme complex.

It localises to the mitochondrion. Functionally, in mitochondria, S-adenosylmethionine-dependent methyltransferase chaperone that supports both coenzyme Q biosynthesis, by stabilizing its components, such as COQ5, and NADH:ubiquinone oxidoreductase complex (complex I, MT-ND1) assembly, by stabilizing complex I assembly factors, such as NDUFAF5. In Rattus norvegicus (Rat), this protein is Protein preY, mitochondrial (Pyurf).